The sequence spans 245 residues: Protein-L-isoaspartate O-methyltransferase 1 (245 aa).

Residue Ser76 is part of the active site.

This sequence belongs to the methyltransferase superfamily. L-isoaspartyl/D-aspartyl protein methyltransferase family.

It localises to the cytoplasm. The catalysed reaction is [protein]-L-isoaspartate + S-adenosyl-L-methionine = [protein]-L-isoaspartate alpha-methyl ester + S-adenosyl-L-homocysteine. In terms of biological role, catalyzes the methyl esterification of L-isoaspartyl residues in peptides and proteins that result from spontaneous decomposition of normal L-aspartyl and L-asparaginyl residues. It plays a role in the repair and/or degradation of damaged proteins. This Rhodopseudomonas palustris (strain HaA2) protein is Protein-L-isoaspartate O-methyltransferase 1.